The following is an 877-amino-acid chain: Alanine--tRNA ligase (877 aa).

Zn(2+) is bound by residues His564, His568, Cys666, and His670.

Belongs to the class-II aminoacyl-tRNA synthetase family. Zn(2+) serves as cofactor.

Its subcellular location is the cytoplasm. The enzyme catalyses tRNA(Ala) + L-alanine + ATP = L-alanyl-tRNA(Ala) + AMP + diphosphate. In terms of biological role, catalyzes the attachment of alanine to tRNA(Ala) in a two-step reaction: alanine is first activated by ATP to form Ala-AMP and then transferred to the acceptor end of tRNA(Ala). Also edits incorrectly charged Ser-tRNA(Ala) and Gly-tRNA(Ala) via its editing domain. The polypeptide is Alanine--tRNA ligase (Pelotomaculum thermopropionicum (strain DSM 13744 / JCM 10971 / SI)).